Here is a 446-residue protein sequence, read N- to C-terminus: Phosphoglucosamine mutase (446 aa).

The active-site Phosphoserine intermediate is S100. Mg(2+) is bound by residues S100, D241, D243, and D245. S100 is modified (phosphoserine).

This sequence belongs to the phosphohexose mutase family. Mg(2+) serves as cofactor. In terms of processing, activated by phosphorylation.

It catalyses the reaction alpha-D-glucosamine 1-phosphate = D-glucosamine 6-phosphate. Its function is as follows. Catalyzes the conversion of glucosamine-6-phosphate to glucosamine-1-phosphate. This chain is Phosphoglucosamine mutase, found in Methylobacterium nodulans (strain LMG 21967 / CNCM I-2342 / ORS 2060).